We begin with the raw amino-acid sequence, 119 residues long: Flagellar transcriptional regulator FlhD (119 aa).

It belongs to the FlhD family. Homodimer; disulfide-linked. Forms a heterohexamer composed of two FlhC and four FlhD subunits. Each FlhC binds a FlhD dimer, forming a heterotrimer, and a hexamer assembles by dimerization of two heterotrimers.

It is found in the cytoplasm. In terms of biological role, functions in complex with FlhC as a master transcriptional regulator that regulates transcription of several flagellar and non-flagellar operons by binding to their promoter region. Activates expression of class 2 flagellar genes, including fliA, which is a flagellum-specific sigma factor that turns on the class 3 genes. Also regulates genes whose products function in a variety of physiological pathways. The chain is Flagellar transcriptional regulator FlhD from Yersinia enterocolitica.